The chain runs to 615 residues: MLSYFQGFVPIHTIFYSVFHPTEGSKIKYEFPPNNLKNHGINFNTFKNYIIPKPILCHKLITFKYGTYRIVCYPVTINSPIYARNFFSFNFVFVFPYDCETSPYEPAITRLGKMFKVLEEQNQLLSKSERDPVFFDLKVLENSTTTPSTAGPSSTPNPSSNTTPTHPTSEKDTKDMRSSRYSDLIKDLGLPQSAFSIQDLLMRIFQDLNNYSECLIPIDEGNAVDIKIFPLLRPPTTCVSLEDVPLSSVNLKKIIDVNWDPTMMSIVPYIDGLNSIAKISKLSNSDPGLVIECIRHLIYYKCVTLSDIFQFSNIYAPSSLIRNFLTDPLMASDCQSYVTFPEVSKISNLPLNKSLGSGDQDSPSFSVRRKSKSSSIPSNPDSRTTSFSSTSRVSQNSSLNSSFSSIYKDWRQSQTSCSSSNIHVINNRNRFLPTRSCLFDLYRSLSQGQTLKTWYESKYMILKENNIDIRRFITFGLEKRIIYRCYSFPVMINAGSREPKEMTPIITKDLVNNDKLLEKRNHNHLLSATGSRNTAQSGNLKPERPSKVSFEMQRVSSLATGKSTMPKLSDEEEGILEESIRNAETFDKICVLLSKPKLEVESYLNELGEFKVINS.

The segment covering 143–167 (STTTPSTAGPSSTPNPSSNTTPTHP) has biased composition (low complexity). Disordered regions lie at residues 143-176 (STTT…TKDM), 354-398 (SLGS…QNSS), and 527-551 (SATG…VSFE). Phosphoserine is present on Ser-362. Residues 373–398 (SSSIPSNPDSRTTSFSSTSRVSQNSS) show a composition bias toward low complexity. Residues 527–539 (SATGSRNTAQSGN) show a composition bias toward polar residues.

The protein belongs to the NPR2 family. Component of the SEA complex composed of at least IML1/SEA1, RTC1/SEA2, MTC5/SEA3, NPR2, NPR3, SEA4, SEC13 and SEH1. Forms a heterodimer with NPR3.

The protein localises to the vacuole membrane. Its function is as follows. Component of the SEA complex which coats the vacuolar membrane and is involved in intracellular trafficking, autophagy, response to nitrogen starvation, and amino acid biogenesis. Mediates inactivation of the TORC1 complex in response to amino acid starvation. Post-transcriptional regulator of nitrogen permeases. May be involved in putative NPR1-dependent phosphorylation of nitrogen permeases or in the processing and targeting of nitrogen permeases at the level of the endoplasmic reticulum. This Saccharomyces cerevisiae (strain ATCC 204508 / S288c) (Baker's yeast) protein is Nitrogen permease regulator 2 (NPR2).